The sequence spans 135 residues: Transcriptional regulator HosA (135 aa).

An HTH marR-type domain is found at 4-134; the sequence is RNKAFHQLRQ…FMQLVRKMMN (131 aa). The H-T-H motif DNA-binding region spans 48–71; it reads QVALIEAAVSTKATLAEMLARMEN.

Involved in the temperature-dependent positive control of flagellum-driven swimming motility and cellular aggregation. Regulates fliC expression by directly interacting with fliC promoter. This Escherichia coli O127:H6 (strain E2348/69 / EPEC) protein is Transcriptional regulator HosA (hosA).